The primary structure comprises 215 residues: S-crystallin 2 (215 aa).

Residues 2-80 (PSYTLHYFNH…YLAREFGFHG (79 aa)) enclose the GST N-terminal domain. In terms of domain architecture, GST C-terminal spans 82-215 (NNLDMARVDF…YLKSRSSTDF (134 aa)).

It belongs to the GST superfamily. In terms of tissue distribution, lens.

Functionally, S-crystallins are structural components of squids and octopi eye lens. Contains relatively little GST activity (1/1000 of that of mammalian GST enzyme). This is S-crystallin 2 (OCTS2) from Octopus vulgaris (Common octopus).